Consider the following 694-residue polypeptide: GRB2-associated-binding protein 1 (694 aa).

Residue serine 2 is modified to N-acetylserine. The region spanning 5-116 (EVVCSGWLRK…WVRCICDICG (112 aa)) is the PH domain. Disordered regions lie at residues 122–164 (EDPV…PYQL) and 194–231 (PEPT…SKHG). Residues 145–157 (APPSTQADSSSAT) show a composition bias toward polar residues. Over residues 194–203 (PEPTRTHADS) the composition is skewed to basic and acidic residues. Over residues 204 to 231 (AKSTSSETDCNDNVPSHKNPASSQSKHG) the composition is skewed to polar residues. Phosphoserine is present on residues serine 251, serine 253, serine 266, and serine 304. Positions 323–386 (FPEGTLGQTS…TAGMSPSRSN (64 aa)) are disordered. Residues 362–386 (IPRTASDTDSSYCIPTAGMSPSRSN) are compositionally biased toward polar residues. Position 387 is a phosphothreonine (threonine 387). Phosphoserine occurs at positions 402 and 454. Disordered regions lie at residues 493–532 (AHMG…VKPA) and 544–656 (ELQA…ADER). Residue alanine 547 is modified to Phosphoserine. Positions 594 to 611 (PNLSSEDPNLFGSNSLDG) are enriched in polar residues. Tyrosine 627 is subject to Phosphotyrosine. The residue at position 638 (threonine 638) is a Phosphothreonine. Serine 651 carries the post-translational modification Phosphoserine. Tyrosine 659 is modified (phosphotyrosine). The tract at residues 671-694 (KSTREAWTDGRQSTESETPAKSVK) is disordered. Positions 672–684 (STREAWTDGRQST) are enriched in basic and acidic residues. At serine 683 the chain carries Phosphoserine. Residues 685-694 (ESETPAKSVK) are compositionally biased toward polar residues.

Belongs to the GAB family. In terms of assembly, identified in a complex containing FRS2, GRB2, GAB1, PIK3R1 and SOS1. Forms a tripartite complex containing GAB1, METTL13 and SPRY2. Within the complex interacts with METTL13. Interacts with GRB2 and with other SH2-containing proteins. Interacts with phosphorylated LAT2. Interacts with PTPRJ. Interacts (phosphorylated) with PTPN11. Interacts with HCK. Phosphorylated in response to FGFR1 activation. Phosphorylated on tyrosine residue(s) by the epidermal growth factor receptor (EGFR) and the insulin receptor (INSR). Tyrosine phosphorylation of GAB1 mediates interaction with several proteins that contain SH2 domains. Phosphorylated on tyrosine residues by HCK upon IL6 signaling.

In terms of biological role, adapter protein that plays a role in intracellular signaling cascades triggered by activated receptor-type kinases. Plays a role in FGFR1 signaling. Probably involved in signaling by the epidermal growth factor receptor (EGFR) and the insulin receptor (INSR). Involved in the MET/HGF-signaling pathway. The polypeptide is GRB2-associated-binding protein 1 (GAB1) (Homo sapiens (Human)).